The sequence spans 589 residues: L-fucose isomerase (589 aa).

Residues E340 and D364 each act as proton acceptor in the active site. Mn(2+) contacts are provided by E340, D364, and H527.

Belongs to the L-fucose isomerase family. Mn(2+) is required as a cofactor.

The protein resides in the cytoplasm. It catalyses the reaction L-fucose = L-fuculose. The protein operates within carbohydrate degradation; L-fucose degradation; L-lactaldehyde and glycerone phosphate from L-fucose: step 1/3. Its function is as follows. Converts the aldose L-fucose into the corresponding ketose L-fuculose. In Haemophilus influenzae (strain PittEE), this protein is L-fucose isomerase.